The primary structure comprises 749 residues: Catalase-peroxidase 2 (749 aa).

An N-terminal signal peptide occupies residues 1-27; it reads MFKRTIPLFAAFTLAISPSIFPNYAHA. A cross-link (tryptophyl-tyrosyl-methioninium (Trp-Tyr) (with M-255)) is located at residues 107 to 229; the sequence is WHAAGTYRIY…LAATVMGLIY (123 aa). Histidine 108 (proton acceptor) is an active-site residue. The segment at residues 229–255 is a cross-link (tryptophyl-tyrosyl-methioninium (Tyr-Met) (with W-107)); that stretch reads YVNPEGPNGVPDPLAAAEKIRETFGRM. Position 270 (histidine 270) interacts with heme b.

The protein belongs to the peroxidase family. Peroxidase/catalase subfamily. In terms of assembly, homodimer or homotetramer. Heme b is required as a cofactor. In terms of processing, formation of the three residue Trp-Tyr-Met cross-link is important for the catalase, but not the peroxidase activity of the enzyme.

The catalysed reaction is H2O2 + AH2 = A + 2 H2O. It catalyses the reaction 2 H2O2 = O2 + 2 H2O. Bifunctional enzyme with both catalase and broad-spectrum peroxidase activity. This is Catalase-peroxidase 2 from Legionella pneumophila (strain Lens).